The primary structure comprises 184 residues: Protein GrpE (184 aa).

Positions 1–14 are enriched in polar residues; that stretch reads MANEQNEQSQDLSS. Residues 1–35 are disordered; sequence MANEQNEQSQDLSSEQTTQDHEQTQTEGVEQGAEI.

It belongs to the GrpE family. As to quaternary structure, homodimer.

It localises to the cytoplasm. Its function is as follows. Participates actively in the response to hyperosmotic and heat shock by preventing the aggregation of stress-denatured proteins, in association with DnaK and GrpE. It is the nucleotide exchange factor for DnaK and may function as a thermosensor. Unfolded proteins bind initially to DnaJ; upon interaction with the DnaJ-bound protein, DnaK hydrolyzes its bound ATP, resulting in the formation of a stable complex. GrpE releases ADP from DnaK; ATP binding to DnaK triggers the release of the substrate protein, thus completing the reaction cycle. Several rounds of ATP-dependent interactions between DnaJ, DnaK and GrpE are required for fully efficient folding. The polypeptide is Protein GrpE (Acinetobacter baylyi (strain ATCC 33305 / BD413 / ADP1)).